An 81-amino-acid chain; its full sequence is RBAK downstream neighbor protein (81 aa).

An N-terminal signal peptide occupies residues 1–22 (MWPPLLLLLLLLPAAPVPTAKA).

It localises to the secreted. In Homo sapiens (Human), this protein is RBAK downstream neighbor protein (RBAKDN).